The primary structure comprises 148 residues: 3-hydroxyacyl-[acyl-carrier-protein] dehydratase FabZ (148 aa).

Residue His50 is part of the active site.

The protein belongs to the thioester dehydratase family. FabZ subfamily.

The protein localises to the cytoplasm. It catalyses the reaction a (3R)-hydroxyacyl-[ACP] = a (2E)-enoyl-[ACP] + H2O. In terms of biological role, involved in unsaturated fatty acids biosynthesis. Catalyzes the dehydration of short chain beta-hydroxyacyl-ACPs and long chain saturated and unsaturated beta-hydroxyacyl-ACPs. This chain is 3-hydroxyacyl-[acyl-carrier-protein] dehydratase FabZ, found in Levilactobacillus brevis (strain ATCC 367 / BCRC 12310 / CIP 105137 / JCM 1170 / LMG 11437 / NCIMB 947 / NCTC 947) (Lactobacillus brevis).